The following is a 435-amino-acid chain: ATP-dependent protease ATPase subunit HslU (435 aa).

ATP is bound by residues I18, 60–65 (GVGKTE), D248, E313, and R385.

This sequence belongs to the ClpX chaperone family. HslU subfamily. A double ring-shaped homohexamer of HslV is capped on each side by a ring-shaped HslU homohexamer. The assembly of the HslU/HslV complex is dependent on binding of ATP.

It is found in the cytoplasm. ATPase subunit of a proteasome-like degradation complex; this subunit has chaperone activity. The binding of ATP and its subsequent hydrolysis by HslU are essential for unfolding of protein substrates subsequently hydrolyzed by HslV. HslU recognizes the N-terminal part of its protein substrates and unfolds these before they are guided to HslV for hydrolysis. This is ATP-dependent protease ATPase subunit HslU from Allorhizobium ampelinum (strain ATCC BAA-846 / DSM 112012 / S4) (Agrobacterium vitis (strain S4)).